A 285-amino-acid polypeptide reads, in one-letter code: Undecaprenyl-diphosphatase 2 (285 aa).

8 helical membrane passes run 5–25 (MDLLHVFILAVIQGLAELLPV), 47–67 (MTFLLVMLHTGTMFAVIVYFW), 86–106 (WYVLLATAITGVLGLLLQSLI), 122–142 (LFSNSKLMAAALAAAGILIIL), 156–176 (LPSAMIIGAVQALCLPFRGFS), 198–218 (FSFALAVVLTPAVIVKELVRL), 235–255 (SLLLPSIFGMVFSFLTGLLAL), and 265–285 (GRWYLFGIYCLAFSGVVLTLA).

It belongs to the UppP family.

It localises to the cell inner membrane. It catalyses the reaction di-trans,octa-cis-undecaprenyl diphosphate + H2O = di-trans,octa-cis-undecaprenyl phosphate + phosphate + H(+). Catalyzes the dephosphorylation of undecaprenyl diphosphate (UPP). Confers resistance to bacitracin. In Acinetobacter baylyi (strain ATCC 33305 / BD413 / ADP1), this protein is Undecaprenyl-diphosphatase 2.